A 716-amino-acid chain; its full sequence is Amino-acid acetyltransferase, mitochondrial (716 aa).

A mitochondrion-targeting transit peptide spans 1–44 (MSLHTGWPRTVNSSFLKKHRSSLCTCQHTSSVLPRSFSTTPDRH). Over residues 37 to 56 (FSTTPDRHVQQSADFSSTSR) the composition is skewed to polar residues. Disordered stretches follow at residues 37–58 (FSTT…SRSY) and 96–121 (KAQH…TLPS). The segment covering 101 to 112 (KSPDANKPEPEK) has biased composition (basic and acidic residues). One can recognise an N-acetyltransferase domain in the interval 537 to 706 (SRPRLKLDDP…YEAVCRSIQP (170 aa)).

It belongs to the acetyltransferase family.

It localises to the mitochondrion. The enzyme catalyses L-glutamate + acetyl-CoA = N-acetyl-L-glutamate + CoA + H(+). The protein operates within amino-acid biosynthesis; L-arginine biosynthesis; N(2)-acetyl-L-ornithine from L-glutamate: step 1/4. Functionally, N-acetylglutamate synthase involved in arginine biosynthesis. This chain is Amino-acid acetyltransferase, mitochondrial (arg2), found in Aspergillus fumigatus (strain CBS 144.89 / FGSC A1163 / CEA10) (Neosartorya fumigata).